The sequence spans 188 residues: FMN reductase (NADH) RutF (188 aa).

Belongs to the non-flavoprotein flavin reductase family. RutF subfamily.

The enzyme catalyses FMNH2 + NAD(+) = FMN + NADH + 2 H(+). In terms of biological role, catalyzes the reduction of FMN to FMNH2 which is used to reduce pyrimidine by RutA via the Rut pathway. The sequence is that of FMN reductase (NADH) RutF from Acinetobacter baylyi (strain ATCC 33305 / BD413 / ADP1).